Reading from the N-terminus, the 504-residue chain is Sperm motility kinase 2A (504 aa).

Residues 28–276 (YEMLGTIGHG…VAEVMMHPWV (249 aa)) enclose the Protein kinase domain. Residues 34–42 (IGHGGSTKV) and Lys-57 contribute to the ATP site. The active-site Proton acceptor is the Asp-147. The 41-residue stretch at 294 to 334 (KPDPAIVKAMGHIGFQAQDIEDSLRQRKFNETMASYCLLKK) folds into the UBA domain. Polar residues-rich tracts occupy residues 376-393 (PTSL…CGRS) and 443-454 (SDESTEGHTSAS). Disordered regions lie at residues 376–403 (PTSL…RSFS) and 443–469 (SDES…PRGI).

This sequence belongs to the protein kinase superfamily. CAMK Ser/Thr protein kinase family. Smok subfamily. In terms of tissue distribution, testis-specific. Expressed in the testis from 22 days postpartum (22 dpp).

It catalyses the reaction L-seryl-[protein] + ATP = O-phospho-L-seryl-[protein] + ADP + H(+). The enzyme catalyses L-threonyl-[protein] + ATP = O-phospho-L-threonyl-[protein] + ADP + H(+). Its function is as follows. May play a role in sperm motility, especially in the regulation of flagellar function. In Mus musculus (Mouse), this protein is Sperm motility kinase 2A (Smok2a).